The following is a 372-amino-acid chain: Envelope phospholipase OPG057 (372 aa).

The YPPL motif lies at 153–156; it reads YPPL. Residues C185 and C186 are each lipidated (S-palmitoyl cysteine; by host). Positions 307-334 constitute a PLD phosphodiesterase domain; that stretch reads FTIQNNTKLLIVDDEYVHITSANFDGTH.

The protein belongs to the orthopoxvirus OPG057 family. As to quaternary structure, interacts with protein OPG190. In terms of processing, palmitoylated. Attachment of the palmitate moiety is essential for correct intracellular targeting and protein function.

It localises to the virion membrane. The protein localises to the host Golgi apparatus. It is found in the host trans-Golgi network. The protein resides in the host endoplasmic reticulum membrane. The enzyme catalyses a 1,2-diacyl-sn-glycero-3-phosphocholine + H2O = a 1,2-diacyl-sn-glycero-3-phosphate + choline + H(+). Major envelope protein that plays a role in the biogenesis of the viral double membrane and in egress of virus from the host cell. Produces the wrapped form of virus that is required for cell-to-cell spread. Acts as a lipase with broad specificity including phospholipase C, phospholipase A, and triacylglycerol lipase activities. The protein is Envelope phospholipase OPG057 (OPG057) of Vaccinia virus (strain Copenhagen) (VACV).